The following is a 206-amino-acid chain: Venom allergen 5 (206 aa).

Cystine bridges form between C5-C18, C9-C103, C28-C96, and C172-C189. The 145-residue stretch at 47 to 191 folds into the SCP domain; sequence LKVHNDFRQK…WYTHYLVCNY (145 aa).

It belongs to the CRISP family. Venom allergen 5-like subfamily. In terms of tissue distribution, expressed by the venom gland.

It is found in the secreted. This is Venom allergen 5 from Vespula vidua (Ground hornet).